Here is a 354-residue protein sequence, read N- to C-terminus: Guanine nucleotide-binding protein G(t) subunit alpha-3 (354 aa).

The interval 1-27 (MGSGISSESKESAKRSKELEKKLQEDA) is disordered. A lipid anchor (N-myristoyl glycine) is attached at glycine 2. A compositionally biased stretch (basic and acidic residues) spans 8 to 27 (ESKESAKRSKELEKKLQEDA). Residues 32–354 (RTVKLLLLGA…KENLKDCGLF (323 aa)) form the G-alpha domain. A G1 motif region spans residues 35 to 48 (KLLLLGAGESGKST). GTP is bound by residues 40–47 (GAGESGKS), 175–181 (LHSRVKT), 200–204 (DVGGQ), 269–272 (NKKD), and alanine 326. The Mg(2+) site is built by serine 47 and threonine 181. Residues 173–181 (DVLHSRVKT) are G2 motif. The tract at residues 196 to 205 (FRMFDVGGQR) is G3 motif. The interval 265-272 (VLFLNKKD) is G4 motif. The segment at 324–329 (TCATDT) is G5 motif.

Belongs to the G-alpha family. G(i/o/t/z) subfamily. In terms of assembly, g proteins are composed of 3 units; alpha, beta and gamma, respectively GNAT3, GNB1 and GNG13 for Gustducin heterotrimer for bitter taste transduction. The alpha chain contains the guanine nucleotide binding site. Component of the TAS2R14-GNAT3 complex, consisting of TAS2R14, GNAT3, GNB1 and GNG2; within the complex interacts with TAS2R14; this complex plays a role in the perception of bitterness. Gustducin heterotrimer may also be composed of GNAT3, GNB3 and GNG13. In terms of processing, potential N-myristoylation may anchor alpha-subunit to the inner surface of plasma membrane. Expressed in taste buds (sensory organs of clustered epithelial cells) of the circumvallate, foliate and fungiform papillae of the tongue, as well as in nasoincisor, palatal and epiglottal taste buds at protein level. Expressed in enteroendocrine of the gut, in the lumenal pole of a subset of brush cells lining the stomach and the intestine at protein level. Detected in solitary cells throughout the respiratory track. Expressed also in spermatozoa.

It localises to the cytoplasm. Functionally, guanine nucleotide-binding protein (G protein) alpha subunit playing a prominent role in bitter and sweet taste transduction as well as in umami (monosodium glutamate, monopotassium glutamate, and inosine monophosphate) taste transduction. Transduction by this alpha subunit involves coupling of specific cell-surface receptors with a cGMP-phosphodiesterase; Activation of phosphodiesterase lowers intracellular levels of cAMP and cGMP which may open a cyclic nucleotide-suppressible cation channel leading to influx of calcium, ultimately leading to release of neurotransmitter. Indeed, denatonium and strychnine induce transient reduction in cAMP and cGMP in taste tissue, whereas this decrease is inhibited by GNAT3 antibody. Gustducin heterotrimer transduces response to bitter and sweet compounds via regulation of phosphodiesterase for alpha subunit, as well as via activation of phospholipase C for beta and gamma subunits, with ultimate increase inositol trisphosphate and increase of intracellular Calcium. GNAT3 can functionally couple to taste receptors to transmit intracellular signal: receptor heterodimer TAS1R2/TAS1R3 senses sweetness and TAS1R1/TAS1R3 transduces umami taste, whereas the T2R family GPCRs act as bitter sensors. Also functions as lumenal sugar sensors in the gut to control the expression of the Na+-glucose transporter SGLT1 in response to dietaty sugar, as well as the secretion of Glucagon-like peptide-1, GLP-1 and glucose-dependent insulinotropic polypeptide, GIP. Thus, may modulate the gut capacity to absorb sugars, with implications for the prevention and treatment of malabsorption syndromes and diet-related disorders including diabetes and obesity. The polypeptide is Guanine nucleotide-binding protein G(t) subunit alpha-3 (Gnat3) (Rattus norvegicus (Rat)).